The primary structure comprises 266 residues: Anamorsin homolog (266 aa).

An N-terminal SAM-like domain region spans residues 1-164 (MIINFVGNTL…NITAENPDFL (164 aa)). The tract at residues 165–185 (SNEDNDVSSDDEDLYNNEDDK) is linker. [4Fe-4S] cluster-binding residues include Cys229, Cys232, Cys240, and Cys243. 2 consecutive short sequence motifs (cx2C motif) follow at residues 229-232 (CGNC) and 240-243 (CASC). The fe-S binding site B stretch occupies residues 229–243 (CGNCYLGDAFRCASC).

Belongs to the anamorsin family. In terms of assembly, monomer. [4Fe-4S] cluster serves as cofactor.

Its subcellular location is the cytoplasm. The protein localises to the mitochondrion intermembrane space. Component of the cytosolic iron-sulfur (Fe-S) protein assembly (CIA) machinery. Required for the maturation of extramitochondrial Fe-S proteins. Part of an electron transfer chain functioning in an early step of cytosolic Fe-S biogenesis, facilitating the de novo assembly of a [4Fe-4S] cluster on the cytosolic Fe-S scaffold complex. Electrons are transferred from NADPH via a FAD- and FMN-containing diflavin oxidoreductase. Together with the diflavin oxidoreductase, also required for the assembly of the diferric tyrosyl radical cofactor of ribonucleotide reductase (RNR), probably by providing electrons for reduction during radical cofactor maturation in the catalytic small subunit. The sequence is that of Anamorsin homolog from Plasmodium falciparum (isolate 3D7).